The primary structure comprises 197 residues: Probable host range protein 2 (197 aa).

The interval 172–197 is disordered; sequence DHDDNDNADDDEEDDDEVNDIEDDYE. Acidic residues predominate over residues 174–197; the sequence is DDNDNADDDEEDDDEVNDIEDDYE.

The protein belongs to the poxviridae C7 protein family.

This Ovis aries (Sheep) protein is Probable host range protein 2.